Reading from the N-terminus, the 400-residue chain is Protein TFG (400 aa).

M1 carries the post-translational modification N-acetylmethionine. In terms of domain architecture, PB1 spans 10–91; sequence KLIIKAQLGE…RILKLTLFVN (82 aa). S50 is subject to Phosphoserine. The stretch at 97 to 124 forms a coiled coil; that stretch reads LESSQVKYLRRELIELRNKVNRLLDSLE. 2 disordered regions span residues 120–160 and 187–400; these read LDSL…STQV and LTDD…PGYR. Positions 150–160 are enriched in polar residues; sequence SDSSGKQSTQV. Phosphoserine is present on S197. Low complexity-rich tracts occupy residues 237–258, 265–298, and 307–327; these read GQIEGQMYQQYQQQAGYGAQQP, PQQYGIQYSASYSQQTGPQQPQQFQGYGQQPTSQ, and QPQQLPAQPPQQYQASNYPAQ. A compositionally biased stretch (polar residues) spans 328–340; it reads TYTAQTSQPTNYT. R385 and R400 each carry omega-N-methylarginine.

In terms of assembly, self-associates to form an oligomeric complex. Interacts with PDCD6; promoting localization and polymerization of TFG at endoplasmic reticulum exit site. Interacts with SEC16B. In terms of tissue distribution, ubiquitous.

It localises to the endoplasmic reticulum. Plays a role in the normal dynamic function of the endoplasmic reticulum (ER) and its associated microtubules. Required for secretory cargo traffic from the endoplasmic reticulum to the Golgi apparatus. The sequence is that of Protein TFG (TFG) from Homo sapiens (Human).